Here is a 1486-residue protein sequence, read N- to C-terminus: Chromosome partition protein MukB (1486 aa).

Gly34 to Ser41 provides a ligand contact to ATP. 3 coiled-coil regions span residues Leu326–Gln418, Leu444–Gln480, and Arg509–Val603. The flexible hinge stretch occupies residues Pro666–Arg783. Coiled coils occupy residues Glu835 to Glu923, Glu977 to Ala1115, and Val1209 to Ser1266.

This sequence belongs to the SMC family. MukB subfamily. As to quaternary structure, homodimerization via its hinge domain. Binds to DNA via its C-terminal region. Interacts, and probably forms a ternary complex, with MukE and MukF via its C-terminal region. The complex formation is stimulated by calcium or magnesium. Interacts with tubulin-related protein FtsZ.

It localises to the cytoplasm. Its subcellular location is the nucleoid. Its function is as follows. Plays a central role in chromosome condensation, segregation and cell cycle progression. Functions as a homodimer, which is essential for chromosome partition. Involved in negative DNA supercoiling in vivo, and by this means organize and compact chromosomes. May achieve or facilitate chromosome segregation by condensation DNA from both sides of a centrally located replisome during cell division. The sequence is that of Chromosome partition protein MukB from Escherichia coli O1:K1 / APEC.